The following is a 2517-amino-acid chain: Cullin-9 (2517 aa).

Lysine 87 participates in a covalent cross-link: Glycyl lysine isopeptide (Lys-Gly) (interchain with G-Cter in ubiquitin). Residues 276 to 288 are compositionally biased toward polar residues; sequence SPELGAGDQSSPC. The disordered stretch occupies residues 276–296; that stretch reads SPELGAGDQSSPCATREKSRG. One can recognise a CPH domain in the interval 366 to 439; the sequence is RSEFSSRSGY…HWHMLEILGP (74 aa). Residues 576-589 are compositionally biased toward low complexity; it reads SNEPSSSSTSRNHS. The segment at 576–639 is disordered; sequence SNEPSSSSTS…TETPMAQSDS (64 aa). Residues 593–609 are compositionally biased toward acidic residues; that stretch reads DPEEESKSEASFSEEET. Positions 610–630 are enriched in basic and acidic residues; that stretch reads ESLKAKAEAPKTEAEPTKTRT. Phosphoserine is present on serine 976. Residues 1143–1322 form the DOC domain; the sequence is PINIPFFDVF…RTCLFYTIRA (180 aa). 1363–1370 lines the ATP pocket; that stretch reads AAQALGKT. Disordered regions lie at residues 1432–1466 and 1664–1685; these read VEPPPGPSPEPSTRPFSKNSKGRDRSPAPSPVLPS and DEEEKRLEEEEEEEEEEEAEKE. The segment covering 1433–1443 has biased composition (pro residues); that stretch reads EPPPGPSPEPS. Serine 1457 is modified (phosphoserine). A coiled-coil region spans residues 1649 to 1691; that stretch reads LFQLQRLDKLFLEQEDEEEKRLEEEEEEEEEEEAEKELFIEDP. Positions 1664–1683 are enriched in acidic residues; the sequence is DEEEKRLEEEEEEEEEEEAE. A Glycyl lysine isopeptide (Lys-Gly) (interchain with G-Cter in NEDD8) cross-link involves residue lysine 1881. The interval 2066–2283 is TRIAD supradomain; sequence RPDHCPVCVS…KDYYNCSAMV (218 aa). Residues cysteine 2070, cysteine 2073, cysteine 2088, histidine 2090, cysteine 2093, cysteine 2096, cysteine 2115, cysteine 2120, cysteine 2160, cysteine 2166, cysteine 2181, cysteine 2184, cysteine 2189, cysteine 2192, histidine 2198, cysteine 2203, cysteine 2236, and cysteine 2239 each contribute to the Zn(2+) site. Residues 2070 to 2120 form an RING-type 1 zinc finger; the sequence is CPVCVSPLGCDDDLPSLCCMHYCCKSCWNEYLTTRIEQNLVLNCTCPIADC. The segment at 2140–2203 adopts an IBR-type zinc-finger fold; that stretch reads SKYEKALLRG…FPEAHYPASC (64 aa). An RING-type 2; atypical zinc finger spans residues 2236–2265; it reads CPSCQAPIEKNEGCLHMTCAKCNHGFCWRC. Cysteine 2249 is a catalytic residue. Zn(2+)-binding residues include cysteine 2254, cysteine 2257, cysteine 2262, cysteine 2265, histidine 2273, and cysteine 2279. Positions 2365-2385 form a coiled coil; the sequence is VEQQTENLELHTNALQILLEE. Serine 2436 bears the Phosphoserine mark. Residues 2442 to 2517 form a disordered region; the sequence is WEAKGPNMPG…EEEDEDEAYD (76 aa). Acidic residues-rich tracts occupy residues 2461–2499 and 2506–2517; these read EAEEEEEDDEDDVPEWQQDEFDEELDNDSFSYDESENLD and GDEEEDEDEAYD.

It belongs to the cullin family. Component of the Cul9-RING complex consisting of CUL9 and RBX1; the CUL9-RBX1 complex is a heterododecamer composed of six CUL9 and six RBX1 protomers. Interacts (via C-terminal TRIAD/RBR supradomain) with E2 ubiquitin-conjugating enzyme UBE2L3. Interacts with CUL7; the interaction with the CUL7 component of the 3M complex leads to inhibition of CUL9 activity. The CUL7-CUL9 heterodimer seems to interact specifically with TP53, likely via the CPH domain. Forms a complex with p53/TP53 in the cytoplasm of unstressed cells. Interacts with UBCH7 and UBCH8. Post-translationally, autoubiquitinated by the CUL9-RBX1 complex at Lys-87. Neddylated. Neddylation is mediated by E1 enzyme UBA3-NAE1 complex and E2 enzyme UBE2F. Structural rearrangment of the C-terminal TRIAD/RBR supradomain may play a role in neddylation and deneddylation. As to expression, ubiquitously expressed in all tissues with highest expression in testis brain and kidney.

It is found in the cytoplasm. Its function is as follows. Core component of a Cul9-RING ubiquitin-protein ligase complex composed of CUL9 and RBX1. The CUL9-RBX1 complex mediates ubiquitination and subsequent degradation of BIRC5 and is required to maintain microtubule dynamics and genome integrity. Acts downstream of the 3M complex, which inhibits the ubiquitination of BIRC5. The CUL9-RBX1 complex also mediates mono-ubiquitination of p53/TP53. Acts as a cytoplasmic anchor protein in p53/TP53-associated protein complex. Regulates the subcellular localization of p53/TP53 and its subsequent function. Ubiquitinates apurinic/apyrimidinic endodeoxyribonuclease APEX2. Ubiquitination by the CUL9-RBX1 complex is predominantly mediated by E2 ubiquitin-conjugating enzymes UBE2L3 and UBE2D2. In Homo sapiens (Human), this protein is Cullin-9 (CUL9).